The sequence spans 248 residues: Adenosylcobinamide-GDP ribazoletransferase (248 aa).

6 helical membrane passes run 36-56 (FFLP…YLGL), 59-79 (FLPA…VTGG), 114-134 (GTIA…SLVL), 137-157 (YSIA…FLCL), 170-190 (IFIG…ILAL), and 199-219 (ATII…LLCL).

Belongs to the CobS family. Mg(2+) is required as a cofactor.

Its subcellular location is the cell membrane. It carries out the reaction alpha-ribazole + adenosylcob(III)inamide-GDP = adenosylcob(III)alamin + GMP + H(+). It catalyses the reaction alpha-ribazole 5'-phosphate + adenosylcob(III)inamide-GDP = adenosylcob(III)alamin 5'-phosphate + GMP + H(+). Its pathway is cofactor biosynthesis; adenosylcobalamin biosynthesis; adenosylcobalamin from cob(II)yrinate a,c-diamide: step 7/7. Functionally, joins adenosylcobinamide-GDP and alpha-ribazole to generate adenosylcobalamin (Ado-cobalamin). Also synthesizes adenosylcobalamin 5'-phosphate from adenosylcobinamide-GDP and alpha-ribazole 5'-phosphate. The sequence is that of Adenosylcobinamide-GDP ribazoletransferase from Clostridium botulinum (strain Kyoto / Type A2).